Consider the following 361-residue polypeptide: Septin-2 (361 aa).

Position 17 is a phosphotyrosine (Y17). A Septin-type G domain is found at 34 to 306; sequence KGFEFTLMVV…ENFRSERLKR (273 aa). Residues 44–51 form a G1 motif region; sequence GESGLGKS. Residues 44-51, T78, G104, and 183-191 each bind GTP; these read GESGLGKS and KADTLTLKE. A G3 motif region spans residues 101–104; the sequence is DTPG. The interval 182-185 is G4 motif; sequence AKAD. An N6-acetyllysine modification is found at K190. Y211 bears the Phosphotyrosine mark. At S218 the chain carries Phosphoserine. 2 residues coordinate GTP: G241 and R256. The interval 260 to 270 is important for dimerization; the sequence is WGVVEVENPEH.

The protein belongs to the TRAFAC class TrmE-Era-EngA-EngB-Septin-like GTPase superfamily. Septin GTPase family. Septins polymerize into heterooligomeric protein complexes that form filaments, and associate with cellular membranes, actin filaments and microtubules. GTPase activity is required for filament formation. Filaments are assembled from asymmetrical heterotrimers, composed of SEPTIN2, SEPTIN6 and SEPTIN7 that associate head-to-head to form a hexameric unit. Interaction between SEPTIN2 and SEPTIN7 seems indirect. Interacts with SEPTIN5. Interaction with SEPTIN4 not detected. Interacts with SEPTIN9. Component of a septin core octameric complex consisting of SEPTIN12, SEPTIN7, SEPTIN6 and SEPTIN2 or SEPTIN4 in the order 12-7-6-2-2-6-7-12 or 12-7-6-4-4-6-7-12 and located in the sperm annulus. Interacts with MAP4. Interacts with DZIP1L.

The protein localises to the cytoplasm. It is found in the cytoskeleton. The protein resides in the spindle. It localises to the chromosome. Its subcellular location is the centromere. The protein localises to the kinetochore. It is found in the cleavage furrow. The protein resides in the midbody. It localises to the cell cortex. Its subcellular location is the cell projection. The protein localises to the cilium membrane. It is found in the cilium. The protein resides in the flagellum. Functionally, filament-forming cytoskeletal GTPase. Forms a filamentous structure with SEPTIN12, SEPTIN6, SEPTIN2 and probably SEPTIN4 at the sperm annulus which is required for the structural integrity and motility of the sperm tail during postmeiotic differentiation. Required for normal organization of the actin cytoskeleton. Plays a role in the biogenesis of polarized columnar-shaped epithelium by maintaining polyglutamylated microtubules, thus facilitating efficient vesicle transport, and by impeding MAP4 binding to tubulin. Required for the progression through mitosis. Forms a scaffold at the midplane of the mitotic splindle required to maintain CENPE localization at kinetochores and consequently chromosome congression. During anaphase, may be required for chromosome segregation and spindle elongation. Plays a role in ciliogenesis and collective cell movements. In cilia, required for the integrity of the diffusion barrier at the base of the primary cilium that prevents diffusion of transmembrane proteins between the cilia and plasma membranes: probably acts by regulating the assembly of the tectonic-like complex (also named B9 complex) by localizing TMEM231 protein. The chain is Septin-2 from Bos taurus (Bovine).